The sequence spans 355 residues: Protein RecA (355 aa).

Position 67-74 (67-74) interacts with ATP; it reads GPESSGKT.

Belongs to the RecA family.

It is found in the cytoplasm. In terms of biological role, can catalyze the hydrolysis of ATP in the presence of single-stranded DNA, the ATP-dependent uptake of single-stranded DNA by duplex DNA, and the ATP-dependent hybridization of homologous single-stranded DNAs. It interacts with LexA causing its activation and leading to its autocatalytic cleavage. In Shewanella amazonensis (strain ATCC BAA-1098 / SB2B), this protein is Protein RecA.